The sequence spans 428 residues: 3-phosphoshikimate 1-carboxyvinyltransferase (428 aa).

3-phosphoshikimate-binding residues include K19, S20, and R24. K19 is a binding site for phosphoenolpyruvate. Phosphoenolpyruvate-binding residues include G91 and R119. Positions 164, 166, 312, and 339 each coordinate 3-phosphoshikimate. Q166 lines the phosphoenolpyruvate pocket. D312 serves as the catalytic Proton acceptor. 2 residues coordinate phosphoenolpyruvate: R343 and R386.

The protein belongs to the EPSP synthase family. As to quaternary structure, monomer.

The protein localises to the cytoplasm. The catalysed reaction is 3-phosphoshikimate + phosphoenolpyruvate = 5-O-(1-carboxyvinyl)-3-phosphoshikimate + phosphate. It functions in the pathway metabolic intermediate biosynthesis; chorismate biosynthesis; chorismate from D-erythrose 4-phosphate and phosphoenolpyruvate: step 6/7. Functionally, catalyzes the transfer of the enolpyruvyl moiety of phosphoenolpyruvate (PEP) to the 5-hydroxyl of shikimate-3-phosphate (S3P) to produce enolpyruvyl shikimate-3-phosphate and inorganic phosphate. The protein is 3-phosphoshikimate 1-carboxyvinyltransferase of Bacillus velezensis (strain DSM 23117 / BGSC 10A6 / LMG 26770 / FZB42) (Bacillus amyloliquefaciens subsp. plantarum).